The primary structure comprises 65 residues: Large ribosomal subunit protein bL35 (65 aa).

Basic residues-rich tracts occupy residues methionine 1–alanine 11 and lysine 21–arginine 43. The interval methionine 1–glycine 65 is disordered.

It belongs to the bacterial ribosomal protein bL35 family.

The chain is Large ribosomal subunit protein bL35 from Desulfovibrio desulfuricans (strain ATCC 27774 / DSM 6949 / MB).